A 111-amino-acid chain; its full sequence is Aspartate 1-decarboxylase (111 aa).

S25 serves as the catalytic Schiff-base intermediate with substrate; via pyruvic acid. At S25 the chain carries Pyruvic acid (Ser). Substrate is bound at residue T57. Catalysis depends on Y58, which acts as the Proton donor. 73–75 (GPA) contacts substrate.

It belongs to the PanD family. Heterooctamer of four alpha and four beta subunits. Pyruvate serves as cofactor. Post-translationally, is synthesized initially as an inactive proenzyme, which is activated by self-cleavage at a specific serine bond to produce a beta-subunit with a hydroxyl group at its C-terminus and an alpha-subunit with a pyruvoyl group at its N-terminus.

It localises to the cytoplasm. It carries out the reaction L-aspartate + H(+) = beta-alanine + CO2. Its pathway is cofactor biosynthesis; (R)-pantothenate biosynthesis; beta-alanine from L-aspartate: step 1/1. In terms of biological role, catalyzes the pyruvoyl-dependent decarboxylation of aspartate to produce beta-alanine. The sequence is that of Aspartate 1-decarboxylase from Francisella tularensis subsp. tularensis (strain FSC 198).